A 165-amino-acid polypeptide reads, in one-letter code: uncharacterized protein (165 aa).

This is an uncharacterized protein from Escherichia coli (strain K12).